Consider the following 407-residue polypeptide: Ribonuclease Z (407 aa).

The segment at 1-308 is ribonuclease Z; it reads MEITFLGTSS…QDFLHYAIPR (308 aa). 7 residues coordinate Zn(2+): His62, His64, Asp66, His67, His139, Asp210, and His268. Asp66 serves as the catalytic Proton acceptor. The interval 309–407 is unknown; the sequence is DGQICAEMPP…VDWSALNVLF (99 aa).

This sequence belongs to the RNase Z family. In terms of assembly, homodimer. It depends on Zn(2+) as a cofactor.

The catalysed reaction is Endonucleolytic cleavage of RNA, removing extra 3' nucleotides from tRNA precursor, generating 3' termini of tRNAs. A 3'-hydroxy group is left at the tRNA terminus and a 5'-phosphoryl group is left at the trailer molecule.. Functionally, zinc phosphodiesterase, which displays some tRNA 3'-processing endonuclease activity. Probably involved in tRNA maturation, by removing a 3'-trailer from precursor tRNA. The sequence is that of Ribonuclease Z (rnz) from Thermosynechococcus vestitus (strain NIES-2133 / IAM M-273 / BP-1).